We begin with the raw amino-acid sequence, 196 residues long: Putative NADH dehydrogenase/NAD(P)H nitroreductase PXO_03909 (196 aa).

Belongs to the nitroreductase family. HadB/RutE subfamily. FMN is required as a cofactor.

This Xanthomonas oryzae pv. oryzae (strain PXO99A) protein is Putative NADH dehydrogenase/NAD(P)H nitroreductase PXO_03909.